We begin with the raw amino-acid sequence, 662 residues long: DCC-interacting protein 13-beta (662 aa).

The BAR domain occupies 3–268 (AVDKLLLEEA…ESVYTPDIDV (266 aa)). The region spanning 277-375 (LIQKTGYLNL…WICAINNISR (99 aa)) is the PH domain. The region spanning 486-635 (SLLQQMFIVR…LMLSVPLTND (150 aa)) is the PID domain. Positions 643–662 (DQADDTGGSPSDHRGAESEA) are disordered. Basic and acidic residues predominate over residues 653–662 (SDHRGAESEA).

In terms of assembly, homodimer. Homotetramer. Binds RAB5A/Rab5 through an N-terminal domain. This interaction is essential for its recruitment to endosomal membranes as well as its role in cell proliferation. Binds subunits of the NuRD/MeCP1 complex. Interacts with FSHR; interaction is independent of follicle stimulating hormone stimulation. Interacts with APPL1; the interaction is decreased by adiponectin in a time-dependent manner. Forms a complex comprising APPL1, RUVBL2, CTNNB1, HDAC1 and HDAC2; interaction reduces interaction between CTNNB1, HDAC1, HDAC2 and RUVBL2 leading to the decrease of deacetylase activity of this complex; affects the recruitment of repressive complexes to the Wnt target genes. Interacts (via BAR domain) with TBC1D1; interaction is dependent of TBC1D1 phosphorylation at 'Ser-235'; interaction diminishes the phosphorylation of TBC1D1 at 'Thr-596', resulting in inhibition of SLC2A4 translocation and glucose uptake. Interacts with ANXA2; targets APPL2 to endosomes and acting in parallel to RAB5A. Interacts with RAB31 (in GTP-bound form); interaction contributes to or enhances recruitment of APPL2 to the phagosomes; interaction enhances Fc-gamma receptor-mediated phagocytosis through PI3K/Akt signaling in macrophages. Interacts with PIK3R1; forms a complex with PIK3R1 and APPL1. Interacts (via BAR domain) with ADIPOR1; hinders the accessibility of APPL1 to ADIPOR1; negatively regulates adiponectin signaling; ADIPOQ dissociates this interaction and facilitates the recruitment of APPL1 to ADIPOR1. Interacts (via BAR domain) with ADIPOR2; ADIPOQ dissociates this interaction.

The protein resides in the early endosome membrane. It localises to the nucleus. It is found in the cell membrane. Its subcellular location is the endosome membrane. The protein localises to the cytoplasm. The protein resides in the cytoplasmic vesicle. It localises to the phagosome. It is found in the cell projection. Its subcellular location is the ruffle. The protein localises to the ruffle membrane. The protein resides in the phagosome membrane. Multifunctional adapter protein that binds to various membrane receptors, nuclear factors and signaling proteins to regulate many processes, such as cell proliferation, immune response, endosomal trafficking and cell metabolism. Regulates signaling pathway leading to cell proliferation through interaction with RAB5A and subunits of the NuRD/MeCP1 complex. Plays a role in immune response by modulating phagocytosis, inflammatory and innate immune responses. In macrophages, enhances Fc-gamma receptor-mediated phagocytosis through interaction with RAB31 leading to activation of PI3K/Akt signaling. In response to LPS, modulates inflammatory responses by playing a key role on the regulation of TLR4 signaling and in the nuclear translocation of RELA/NF-kappa-B p65 and the secretion of pro- and anti-inflammatory cytokines. Also functions as a negative regulator of innate immune response via inhibition of AKT1 signaling pathway by forming a complex with APPL1 and PIK3R1. Plays a role in endosomal trafficking of TGFBR1 from the endosomes to the nucleus. Plays a role in cell metabolism by regulating adiponecting ans insulin signaling pathways and adaptative thermogenesis. In muscle, negatively regulates adiponectin-simulated glucose uptake and fatty acid oyidation by inhibiting adiponectin signaling pathway through APPL1 sequestration thereby antagonizing APPL1 action. In muscles, negatively regulates insulin-induced plasma membrane recruitment of GLUT4 and glucose uptake through interaction with TBC1D1. Plays a role in cold and diet-induced adaptive thermogenesis by activating ventromedial hypothalamus (VMH) neurons throught AMPK inhibition which enhances sympathetic outflow to subcutaneous white adipose tissue (sWAT), sWAT beiging and cold tolerance. Also plays a role in other signaling pathways namely Wnt/beta-catenin, HGF and glucocorticoid receptor signaling. Positive regulator of beta-catenin/TCF-dependent transcription through direct interaction with RUVBL2/reptin resulting in the relief of RUVBL2-mediated repression of beta-catenin/TCF target genes by modulating the interactions within the beta-catenin-reptin-HDAC complex. May affect adult neurogenesis in hippocampus and olfactory system via regulating the sensitivity of glucocorticoid receptor. Required for fibroblast migration through HGF cell signaling. This Rattus norvegicus (Rat) protein is DCC-interacting protein 13-beta.